The following is a 209-amino-acid chain: Large ribosomal subunit protein uL3 (209 aa).

The protein belongs to the universal ribosomal protein uL3 family. As to quaternary structure, part of the 50S ribosomal subunit. Forms a cluster with proteins L14 and L19.

Functionally, one of the primary rRNA binding proteins, it binds directly near the 3'-end of the 23S rRNA, where it nucleates assembly of the 50S subunit. This chain is Large ribosomal subunit protein uL3, found in Nitratidesulfovibrio vulgaris (strain DSM 19637 / Miyazaki F) (Desulfovibrio vulgaris).